The chain runs to 109 residues: Putative double-stranded DNA mimic protein YciU (109 aa).

It belongs to the putative dsDNA mimic protein family.

Its function is as follows. May act as a double-stranded DNA (dsDNA) mimic. Probably regulates the activity of a dsDNA-binding protein. This chain is Putative double-stranded DNA mimic protein YciU, found in Shigella boydii serotype 18 (strain CDC 3083-94 / BS512).